The following is a 209-amino-acid chain: Ribosomal RNA large subunit methyltransferase E (209 aa).

Positions 63, 65, 83, 99, and 124 each coordinate S-adenosyl-L-methionine. The Proton acceptor role is filled by lysine 164.

Belongs to the class I-like SAM-binding methyltransferase superfamily. RNA methyltransferase RlmE family.

It is found in the cytoplasm. It carries out the reaction uridine(2552) in 23S rRNA + S-adenosyl-L-methionine = 2'-O-methyluridine(2552) in 23S rRNA + S-adenosyl-L-homocysteine + H(+). Specifically methylates the uridine in position 2552 of 23S rRNA at the 2'-O position of the ribose in the fully assembled 50S ribosomal subunit. The chain is Ribosomal RNA large subunit methyltransferase E from Proteus mirabilis (strain HI4320).